The sequence spans 437 residues: Enolase (437 aa).

Glutamine 163 lines the (2R)-2-phosphoglycerate pocket. Glutamate 205 functions as the Proton donor in the catalytic mechanism. Aspartate 242, glutamate 285, and aspartate 312 together coordinate Mg(2+). Residues lysine 337, arginine 366, serine 367, and lysine 388 each contribute to the (2R)-2-phosphoglycerate site. Lysine 337 functions as the Proton acceptor in the catalytic mechanism.

The protein belongs to the enolase family. Requires Mg(2+) as cofactor.

The protein localises to the cytoplasm. The protein resides in the secreted. Its subcellular location is the cell surface. The catalysed reaction is (2R)-2-phosphoglycerate = phosphoenolpyruvate + H2O. It functions in the pathway carbohydrate degradation; glycolysis; pyruvate from D-glyceraldehyde 3-phosphate: step 4/5. Its function is as follows. Catalyzes the reversible conversion of 2-phosphoglycerate (2-PG) into phosphoenolpyruvate (PEP). It is essential for the degradation of carbohydrates via glycolysis. The protein is Enolase of Nitratidesulfovibrio vulgaris (strain DP4) (Desulfovibrio vulgaris).